The chain runs to 321 residues: tRNA(Ile)-lysidine synthase (321 aa).

An ATP-binding site is contributed by 30 to 35; the sequence is SGGSDS.

Belongs to the tRNA(Ile)-lysidine synthase family.

Its subcellular location is the cytoplasm. It catalyses the reaction cytidine(34) in tRNA(Ile2) + L-lysine + ATP = lysidine(34) in tRNA(Ile2) + AMP + diphosphate + H(+). Its function is as follows. Ligates lysine onto the cytidine present at position 34 of the AUA codon-specific tRNA(Ile) that contains the anticodon CAU, in an ATP-dependent manner. Cytidine is converted to lysidine, thus changing the amino acid specificity of the tRNA from methionine to isoleucine. The protein is tRNA(Ile)-lysidine synthase of Chlamydia trachomatis serovar D (strain ATCC VR-885 / DSM 19411 / UW-3/Cx).